A 276-amino-acid polypeptide reads, in one-letter code: Rhomboid protease GlpG (276 aa).

6 helical membrane passes run 94–114 (GPVT…MSLI), 142–162 (IFMH…WYLG), 169–189 (LGSG…GYVQ), 192–212 (FSGP…GYVW), 229–249 (LIIF…GMSM), and 250–270 (ANGA…VDTL). Serine 201 functions as the Nucleophile in the catalytic mechanism. Histidine 254 is an active-site residue.

The protein belongs to the peptidase S54 family.

Its subcellular location is the cell inner membrane. The catalysed reaction is Cleaves type-1 transmembrane domains using a catalytic dyad composed of serine and histidine that are contributed by different transmembrane domains.. In terms of biological role, rhomboid-type serine protease that catalyzes intramembrane proteolysis. The protein is Rhomboid protease GlpG of Salmonella agona (strain SL483).